We begin with the raw amino-acid sequence, 230 residues long: Large ribosomal subunit protein uL1 (230 aa).

Belongs to the universal ribosomal protein uL1 family. As to quaternary structure, part of the 50S ribosomal subunit.

In terms of biological role, binds directly to 23S rRNA. The L1 stalk is quite mobile in the ribosome, and is involved in E site tRNA release. Functionally, protein L1 is also a translational repressor protein, it controls the translation of the L11 operon by binding to its mRNA. The polypeptide is Large ribosomal subunit protein uL1 (Desulforapulum autotrophicum (strain ATCC 43914 / DSM 3382 / VKM B-1955 / HRM2) (Desulfobacterium autotrophicum)).